We begin with the raw amino-acid sequence, 84 residues long: uncharacterized protein (84 aa).

A cysteine motif region spans residues 8 to 47 (CECCDRDLPPDSGDAMICTFECTFCAGCAETKLGGTCPNC).

This is an uncharacterized protein from Rhizobium meliloti (strain 1021) (Ensifer meliloti).